The following is a 332-amino-acid chain: Cilia- and flagella-associated protein 119 (332 aa).

Residues M1–L10 are compositionally biased toward polar residues. 3 disordered regions span residues M1–F70, E246–Q271, and R308–K332. The segment covering V14–R30 has biased composition (basic and acidic residues). Over residues E49–P58 the composition is skewed to polar residues. Residues L287–R308 adopt a coiled-coil conformation.

Specifically expressed in testis (at protein level).

Its subcellular location is the cell projection. It is found in the cilium. It localises to the flagellum. The protein localises to the cytoplasmic vesicle. The protein resides in the secretory vesicle. Its subcellular location is the acrosome. It is found in the cytoplasm. The sequence is that of Cilia- and flagella-associated protein 119 from Rattus norvegicus (Rat).